We begin with the raw amino-acid sequence, 342 residues long: UDP-glucuronic acid decarboxylase 3 (342 aa).

Residues M1–T11 are compositionally biased toward polar residues. The disordered stretch occupies residues M1–N22. D61–D86 lines the NAD(+) pocket. R170 provides a ligand contact to substrate. Y173 serves as the catalytic Proton acceptor. Residue Y173 to K177 participates in NAD(+) binding. N202 contributes to the substrate binding site. Position 214 (R214) interacts with NAD(+). Residues V215 to F219, Q232 to R239, and D299 to R303 each bind substrate.

Belongs to the NAD(P)-dependent epimerase/dehydratase family. UDP-glucuronic acid decarboxylase subfamily. NAD(+) is required as a cofactor. Ubiquitous.

The protein resides in the cytoplasm. The enzyme catalyses UDP-alpha-D-glucuronate + H(+) = UDP-alpha-D-xylose + CO2. The protein operates within nucleotide-sugar biosynthesis; UDP-alpha-D-xylose biosynthesis; UDP-alpha-D-xylose from UDP-alpha-D-glucuronate: step 1/1. In terms of biological role, catalyzes the NAD-dependent decarboxylation of UDP-glucuronic acid to UDP-xylose. Necessary for the biosynthesis of the core tetrasaccharide in glycosaminoglycan biosynthesis. This Arabidopsis thaliana (Mouse-ear cress) protein is UDP-glucuronic acid decarboxylase 3 (UXS3).